Here is a 121-residue protein sequence, read N- to C-terminus: Small ribosomal subunit protein uS13 (121 aa).

A disordered region spans residues 94–121; that stretch reads GLPVRGQNTKNNARTRKGPRRTVANKKK. Basic residues predominate over residues 106–121; the sequence is ARTRKGPRRTVANKKK.

It belongs to the universal ribosomal protein uS13 family. As to quaternary structure, part of the 30S ribosomal subunit. Forms a loose heterodimer with protein S19. Forms two bridges to the 50S subunit in the 70S ribosome.

In terms of biological role, located at the top of the head of the 30S subunit, it contacts several helices of the 16S rRNA. In the 70S ribosome it contacts the 23S rRNA (bridge B1a) and protein L5 of the 50S subunit (bridge B1b), connecting the 2 subunits; these bridges are implicated in subunit movement. Contacts the tRNAs in the A and P-sites. In Geobacillus kaustophilus (strain HTA426), this protein is Small ribosomal subunit protein uS13.